Consider the following 360-residue polypeptide: D-alanine--D-alanine ligase (360 aa).

Residues Lys134–Gln343 form the ATP-grasp domain. Ala169–Glu224 lines the ATP pocket. The Mg(2+) site is built by Asp297, Glu310, and Asn312.

It belongs to the D-alanine--D-alanine ligase family. It depends on Mg(2+) as a cofactor. Mn(2+) serves as cofactor.

The protein localises to the cytoplasm. It catalyses the reaction 2 D-alanine + ATP = D-alanyl-D-alanine + ADP + phosphate + H(+). It functions in the pathway cell wall biogenesis; peptidoglycan biosynthesis. Functionally, cell wall formation. The protein is D-alanine--D-alanine ligase of Lactobacillus acidophilus (strain ATCC 700396 / NCK56 / N2 / NCFM).